Consider the following 526-residue polypeptide: NAD(P)H-quinone oxidoreductase subunit 2 (526 aa).

14 helical membrane-spanning segments follow: residues 16-36 (ILPE…DLIL), 43-63 (WTPY…YTQW), 80-100 (LSIA…LMSV), 110-130 (LGEF…LSGA), 133-153 (LVMI…LTGY), 168-188 (LLIG…LYGL), 212-232 (LALV…ISAV), 246-266 (PTPV…ALAI), 280-300 (WHFV…VVAL), 308-328 (LLAY…LANT), 336-356 (IFYL…VILF), 380-400 (LGLS…GFFG), 402-422 (IYLF…LGLI), and 468-488 (VGLI…NPLF).

Belongs to the complex I subunit 2 family. NDH-1 can be composed of about 15 different subunits; different subcomplexes with different compositions have been identified which probably have different functions.

The protein localises to the cellular thylakoid membrane. It carries out the reaction a plastoquinone + NADH + (n+1) H(+)(in) = a plastoquinol + NAD(+) + n H(+)(out). The enzyme catalyses a plastoquinone + NADPH + (n+1) H(+)(in) = a plastoquinol + NADP(+) + n H(+)(out). In terms of biological role, NDH-1 shuttles electrons from an unknown electron donor, via FMN and iron-sulfur (Fe-S) centers, to quinones in the respiratory and/or the photosynthetic chain. The immediate electron acceptor for the enzyme in this species is believed to be plastoquinone. Couples the redox reaction to proton translocation, and thus conserves the redox energy in a proton gradient. Cyanobacterial NDH-1 also plays a role in inorganic carbon-concentration. This is NAD(P)H-quinone oxidoreductase subunit 2 from Trichodesmium erythraeum (strain IMS101).